A 461-amino-acid chain; its full sequence is Vitamin K-dependent protein C (461 aa).

Residues 1–18 (MWQLTSLLLFVATWGISG) form the signal peptide. O-linked (GalNAc...) threonine glycosylation is present at Thr19. The propeptide occupies 19–42 (TPAPLDSVFSSSERAHQVLRIRKR). A Gla domain is found at 43 to 88 (ANSFLEELRHSSLERECIEEICDFEEAKEIFQNVDDTLAFWSKHVD). 9 positions are modified to 4-carboxyglutamate: Glu48, Glu49, Glu56, Glu58, Glu61, Glu62, Glu67, Glu68, and Glu71. Cysteines 59 and 64 form a disulfide. Intrachain disulfides connect Cys92/Cys111, Cys101/Cys106, Cys105/Cys120, and Cys122/Cys131. EGF-like domains lie at 97–132 (LEHP…RFCQ) and 136–176 (SFLN…LQCH). Asp113 is subject to (3R)-3-hydroxyaspartate. Asn139 is a glycosylation site (N-linked (GlcNAc...) asparagine). Intrachain disulfides connect Cys140–Cys151, Cys147–Cys160, Cys162–Cys175, Cys183–Cys319, and Cys238–Cys254. A Peptidase S1 domain is found at 212–450 (LIDGKMTRRG…YLDWIHGHIR (239 aa)). His253 acts as the Charge relay system in catalysis. The N-linked (GlcNAc...) asparagine glycan is linked to Asn290. Residue Asp299 is the Charge relay system of the active site. Phosphoserine; by FAM20C is present on Ser347. An N-linked (GlcNAc...) asparagine glycan is attached at Asn355. N-linked (GlcNAc...) asparagine; atypical; partial glycosylation is present at Asn371. Intrachain disulfides connect Cys373/Cys387 and Cys398/Cys426. Ser402 functions as the Charge relay system in the catalytic mechanism.

It belongs to the peptidase S1 family. In terms of assembly, synthesized as a single chain precursor, which is cleaved into a light chain and a heavy chain held together by a disulfide bond. The enzyme is then activated by thrombin, which cleaves a tetradecapeptide from the amino end of the heavy chain; this reaction, which occurs at the surface of endothelial cells, is strongly promoted by thrombomodulin. Interacts (activated) with iripin-8, a serine protease inhibitor from Ixodes ricinus saliva. In terms of processing, the vitamin K-dependent, enzymatic carboxylation of some Glu residues allows the modified protein to bind calcium. Post-translationally, N- and O-glycosylated. Partial (70%) N-glycosylation of Asn-371 with an atypical N-X-C site produces a higher molecular weight form referred to as alpha. The lower molecular weight form, not N-glycosylated at Asn-371, is beta. O-glycosylated with core 1 or possibly core 8 glycans. The iron and 2-oxoglutarate dependent 3-hydroxylation of aspartate and asparagine is (R) stereospecific within EGF domains. In terms of processing, may be phosphorylated on a Ser or Thr in a region (AA 25-30) of the propeptide. Plasma; synthesized in the liver.

The protein localises to the secreted. The protein resides in the golgi apparatus. Its subcellular location is the endoplasmic reticulum. It catalyses the reaction Degradation of blood coagulation factors Va and VIIIa.. Its function is as follows. Protein C is a vitamin K-dependent serine protease that regulates blood coagulation by inactivating factors Va and VIIIa in the presence of calcium ions and phospholipids. Exerts a protective effect on the endothelial cell barrier function. The polypeptide is Vitamin K-dependent protein C (PROC) (Homo sapiens (Human)).